The primary structure comprises 393 residues: Telomeric repeat-binding factor 2-interacting protein 1 (393 aa).

Ala-2 carries the N-acetylalanine modification. Residues 10–101 enclose the BRCT domain; the sequence is DPNGPTHSST…EKLELEAYRL (92 aa). Ser-36 and Ser-43 each carry phosphoserine. The interval 104–132 is disordered; that stretch reads TEQASDPKPGASAEGSTEPEPQPLTGRIA. Lys-111 is covalently cross-linked (Glycyl lysine isopeptide (Lys-Gly) (interchain with G-Cter in SUMO2)). In terms of domain architecture, Myb-like spans 125–185; it reads QPLTGRIAYT…SLKDRYLKHL (61 aa). Phosphoserine occurs at positions 151 and 153. Lys-191 is covalently cross-linked (Glycyl lysine isopeptide (Lys-Gly) (interchain with G-Cter in SUMO2)). Disordered regions lie at residues 194–248 and 272–305; these read LGNA…EADN and HITMCDGDPPTPEEDSETQPDEEEEEPKVSTQEV. Residues Ser-200 and Ser-203 each carry the phosphoserine modification. Glycyl lysine isopeptide (Lys-Gly) (interchain with G-Cter in SUMO2) cross-links involve residues Lys-205, Lys-209, and Lys-237. A compositionally biased stretch (basic and acidic residues) spans 223–248; it reads QNKRTPDLPEEECVKGETKENGEADN. Residues 282–297 are compositionally biased toward acidic residues; it reads TPEEDSETQPDEEEEE. Residue Lys-366 forms a Glycyl lysine isopeptide (Lys-Gly) (interchain with G-Cter in SUMO2) linkage. A Nuclear localization signal motif is present at residues 377–393; the sequence is KKYGAQNVARRIEFRKK.

It belongs to the RAP1 family. As to quaternary structure, associates with the I-kappa-B-kinase (IKK) core complex, composed of CHUK, IKBKB and IKBKG. Homodimer. Component of the shelterin complex (telosome) composed of TERF1, TERF2, TINF2, TERF2IP ACD and POT1. Interacts with TERF2 (but not TERF1) with its C-terminus. Interacts with SLX4/BTBD12. Interacts with TERF2; the interaction is direct.

The protein resides in the nucleus. The protein localises to the cytoplasm. Its subcellular location is the chromosome. It localises to the telomere. Its function is as follows. Acts both as a regulator of telomere function and as a transcription regulator. Involved in the regulation of telomere length and protection as a component of the shelterin complex (telosome). In contrast to other components of the shelterin complex, it is dispensible for telomere capping and does not participate in the protection of telomeres against non-homologous end-joining (NHEJ)-mediated repair. Instead, it is required to negatively regulate telomere recombination and is essential for repressing homology-directed repair (HDR), which can affect telomere length. Does not bind DNA directly: recruited to telomeric double-stranded 5'-TTAGGG-3' repeats via its interaction with TERF2. Independently of its function in telomeres, also acts as a transcription regulator: recruited to extratelomeric 5'-TTAGGG-3' sites via its association with TERF2 or other factors, and regulates gene expression. When cytoplasmic, associates with the I-kappa-B-kinase (IKK) complex and acts as a regulator of the NF-kappa-B signaling by promoting IKK-mediated phosphorylation of RELA/p65, leading to activate expression of NF-kappa-B target genes. The chain is Telomeric repeat-binding factor 2-interacting protein 1 (Terf2ip) from Rattus norvegicus (Rat).